The sequence spans 352 residues: 4-hydroxy-2-oxovalerate aldolase 4 (352 aa).

A Pyruvate carboxyltransferase domain is found at 9 to 261 (IRVTDSSLRD…RTGIDTLKII (253 aa)). 17–18 (RD) lines the substrate pocket. Aspartate 18 provides a ligand contact to Mn(2+). The active-site Proton acceptor is the histidine 21. Positions 171 and 200 each coordinate substrate. Positions 200 and 202 each coordinate Mn(2+). Tyrosine 291 provides a ligand contact to substrate.

This sequence belongs to the 4-hydroxy-2-oxovalerate aldolase family.

It carries out the reaction (S)-4-hydroxy-2-oxopentanoate = acetaldehyde + pyruvate. The protein is 4-hydroxy-2-oxovalerate aldolase 4 of Rhodococcus jostii (strain RHA1).